We begin with the raw amino-acid sequence, 324 residues long: Ribosomal lysine N-methyltransferase 5 (324 aa).

S-adenosyl-L-methionine-binding positions include Trp-90, 140-142 (GSG), Asp-162, Trp-217, and Met-247.

Belongs to the class I-like SAM-binding methyltransferase superfamily. RKM5 family.

Functionally, S-adenosyl-L-methionine-dependent protein-lysine N-methyltransferase that methylates 60S ribosomal protein L1. This chain is Ribosomal lysine N-methyltransferase 5 (RKM5), found in Vanderwaltozyma polyspora (strain ATCC 22028 / DSM 70294 / BCRC 21397 / CBS 2163 / NBRC 10782 / NRRL Y-8283 / UCD 57-17) (Kluyveromyces polysporus).